A 411-amino-acid chain; its full sequence is Imidazolonepropionase (411 aa).

Residues His-78 and His-80 each coordinate Fe(3+). Zn(2+) contacts are provided by His-78 and His-80. 3 residues coordinate 4-imidazolone-5-propanoate: Arg-87, Tyr-150, and His-183. Tyr-150 serves as a coordination point for N-formimidoyl-L-glutamate. Residue His-248 participates in Fe(3+) binding. His-248 lines the Zn(2+) pocket. Gln-251 contributes to the 4-imidazolone-5-propanoate binding site. Asp-322 contributes to the Fe(3+) binding site. Residue Asp-322 coordinates Zn(2+). The N-formimidoyl-L-glutamate site is built by Asn-324 and Gly-326. Ser-327 contacts 4-imidazolone-5-propanoate.

The protein belongs to the metallo-dependent hydrolases superfamily. HutI family. Zn(2+) serves as cofactor. Requires Fe(3+) as cofactor.

The protein localises to the cytoplasm. It catalyses the reaction 4-imidazolone-5-propanoate + H2O = N-formimidoyl-L-glutamate. It functions in the pathway amino-acid degradation; L-histidine degradation into L-glutamate; N-formimidoyl-L-glutamate from L-histidine: step 3/3. In terms of biological role, catalyzes the hydrolytic cleavage of the carbon-nitrogen bond in imidazolone-5-propanoate to yield N-formimidoyl-L-glutamate. It is the third step in the universal histidine degradation pathway. This Flavobacterium johnsoniae (strain ATCC 17061 / DSM 2064 / JCM 8514 / BCRC 14874 / CCUG 350202 / NBRC 14942 / NCIMB 11054 / UW101) (Cytophaga johnsonae) protein is Imidazolonepropionase.